Consider the following 340-residue polypeptide: Tetrathionate reductase subunit C (340 aa).

Transmembrane regions (helical) follow at residues 19–39 (WLPW…AALF), 57–77 (ALLI…ADLH), 94–114 (WMPW…LWFL), 128–148 (VTKW…IYTG), 164–184 (AFPV…MIVA), 195–215 (ILWG…MWVS), 236–256 (YYAV…SLAL), 266–286 (VLLV…LLIQ), and 306–326 (TDGW…LIII).

The protein belongs to the NrfD family. In terms of assembly, probably composed of three subunits: TtrA, TtrB and TtrC.

It localises to the cell inner membrane. Part of a membrane-bound tetrathionate reductase that catalyzes the reduction of tetrathionate to thiosulfate. TtrC probably anchors TtrA and TtrB to the periplasmic face of the cytoplasmic membrane. May transfer electrons from membrane quinol to TtrB. During mice infection, the ability to use tetrathionate as an electron acceptor is a growth advantage for S.typhimurium over the competing microbiota in the lumen of the inflamed gut. This Salmonella typhimurium (strain LT2 / SGSC1412 / ATCC 700720) protein is Tetrathionate reductase subunit C (ttrC).